The sequence spans 237 residues: Ribonuclease PH (237 aa).

Phosphate contacts are provided by residues Arg86 and 124 to 126 (GTR).

This sequence belongs to the RNase PH family. Homohexameric ring arranged as a trimer of dimers.

The enzyme catalyses tRNA(n+1) + phosphate = tRNA(n) + a ribonucleoside 5'-diphosphate. Functionally, phosphorolytic 3'-5' exoribonuclease that plays an important role in tRNA 3'-end maturation. Removes nucleotide residues following the 3'-CCA terminus of tRNAs; can also add nucleotides to the ends of RNA molecules by using nucleoside diphosphates as substrates, but this may not be physiologically important. Probably plays a role in initiation of 16S rRNA degradation (leading to ribosome degradation) during starvation. The sequence is that of Ribonuclease PH from Beijerinckia indica subsp. indica (strain ATCC 9039 / DSM 1715 / NCIMB 8712).